A 957-amino-acid polypeptide reads, in one-letter code: Glycine dehydrogenase (decarboxylating) (957 aa).

K708 is subject to N6-(pyridoxal phosphate)lysine.

This sequence belongs to the GcvP family. In terms of assembly, the glycine cleavage system is composed of four proteins: P, T, L and H. Pyridoxal 5'-phosphate is required as a cofactor.

The enzyme catalyses N(6)-[(R)-lipoyl]-L-lysyl-[glycine-cleavage complex H protein] + glycine + H(+) = N(6)-[(R)-S(8)-aminomethyldihydrolipoyl]-L-lysyl-[glycine-cleavage complex H protein] + CO2. In terms of biological role, the glycine cleavage system catalyzes the degradation of glycine. The P protein binds the alpha-amino group of glycine through its pyridoxal phosphate cofactor; CO(2) is released and the remaining methylamine moiety is then transferred to the lipoamide cofactor of the H protein. The chain is Glycine dehydrogenase (decarboxylating) from Escherichia fergusonii (strain ATCC 35469 / DSM 13698 / CCUG 18766 / IAM 14443 / JCM 21226 / LMG 7866 / NBRC 102419 / NCTC 12128 / CDC 0568-73).